Here is a 204-residue protein sequence, read N- to C-terminus: U1 small nuclear ribonucleoprotein C (204 aa).

A Matrin-type zinc finger spans residues phenylalanine 4–aspartate 36. The tract at residues alanine 65–arginine 204 is disordered. Composition is skewed to pro residues over residues glycine 77–proline 154 and alanine 166–alanine 192.

The protein belongs to the U1 small nuclear ribonucleoprotein C family. In terms of assembly, U1 snRNP is composed of the 7 core Sm proteins B/B', D1, D2, D3, E, F and G that assemble in a heptameric protein ring on the Sm site of the small nuclear RNA to form the core snRNP, and at least 3 U1 snRNP-specific proteins U1-70K, U1-A and U1-C. U1-C interacts with U1 snRNA and the 5' splice-site region of the pre-mRNA.

The protein localises to the nucleus. Its function is as follows. Component of the spliceosomal U1 snRNP, which is essential for recognition of the pre-mRNA 5' splice-site and the subsequent assembly of the spliceosome. U1-C is directly involved in initial 5' splice-site recognition for both constitutive and regulated alternative splicing. The interaction with the 5' splice-site seems to precede base-pairing between the pre-mRNA and the U1 snRNA. Stimulates commitment or early (E) complex formation by stabilizing the base pairing of the 5' end of the U1 snRNA and the 5' splice-site region. The polypeptide is U1 small nuclear ribonucleoprotein C (Fusarium vanettenii (strain ATCC MYA-4622 / CBS 123669 / FGSC 9596 / NRRL 45880 / 77-13-4) (Fusarium solani subsp. pisi)).